The following is a 318-amino-acid chain: MVFHLKPFDVDNIHEHIFDRYTLLESLADGLSQDLGIHQRDEIVQVDIEPPITTKVKGKRKASKGLQPYNFTIRQSIAGLNSSSNANSTTGYVLWSTTPTFARWLLYDGNALPLREEDTDTSIPAIFSGSKSTAVVELGSGISGILPIVLGDQVDHYVCTDQKGILSKLKYNIEENLLQFNRRRCISEFLQIEPPSNEDQQRRNTRLEIMELDWEKFNGPTAQTHLTRISEECSTVHIVAMDVIYNDFLIDPFLKTLNHLRNYYLNEGLITHCIVGIHLRAQDVVEAFLERAILEYNLPICSVEDPFLEKTRVSLYYI.

S-adenosyl-L-methionine is bound by residues Trp-95, 139–141 (GSG), Asp-161, Trp-214, and Met-241.

The protein belongs to the class I-like SAM-binding methyltransferase superfamily. RKM5 family.

Functionally, S-adenosyl-L-methionine-dependent protein-lysine N-methyltransferase that methylates 60S ribosomal protein L1. The chain is Ribosomal lysine N-methyltransferase 5 (RKM5) from Zygosaccharomyces rouxii (strain ATCC 2623 / CBS 732 / NBRC 1130 / NCYC 568 / NRRL Y-229).